The chain runs to 101 residues: Small ribosomal subunit protein uS14 (101 aa).

The protein belongs to the universal ribosomal protein uS14 family. Part of the 30S ribosomal subunit. Contacts proteins S3 and S10.

Functionally, binds 16S rRNA, required for the assembly of 30S particles and may also be responsible for determining the conformation of the 16S rRNA at the A site. In Vibrio vulnificus (strain CMCP6), this protein is Small ribosomal subunit protein uS14.